The following is a 304-amino-acid chain: Uricase (304 aa).

Position 2 is an N-acetylalanine (A2). K10 and K23 each carry N6-acetyllysine; alternate. An N6-succinyllysine; alternate mark is found at K10 and K23. The active-site Charge relay system is the K23. Residues K27 and K36 each carry the N6-acetyllysine modification. Phosphoserine occurs at positions 39 and 63. The active-site Charge relay system is T68. Urate contacts are provided by T68 and D69. N6-acetyllysine occurs at positions 118, 122, and 164. F170 contacts urate. An N6-acetyllysine mark is found at K175 and K185. Residue R187 participates in urate binding. 2 positions are modified to N6-acetyllysine; alternate: K221 and K228. Residues K221 and K228 each carry the N6-succinyllysine; alternate modification. The residue at position 232 (S232) is a Phosphoserine. Positions 235, 236, and 262 each coordinate urate. Residue H264 is the Charge relay system of the active site. K278 bears the N6-acetyllysine mark. The residue at position 289 (Y289) is a Phosphotyrosine. The Microbody targeting signal motif lies at 302 to 304 (SRL).

The protein belongs to the uricase family.

Its subcellular location is the peroxisome. The catalysed reaction is urate + O2 + H2O = 5-hydroxyisourate + H2O2. It participates in purine metabolism; urate degradation; (S)-allantoin from urate: step 1/3. Catalyzes the oxidation of uric acid to 5-hydroxyisourate, which is further processed to form (S)-allantoin. The sequence is that of Uricase (UOX) from Macaca mulatta (Rhesus macaque).